A 214-amino-acid chain; its full sequence is Probable GTP-binding protein EngB (214 aa).

One can recognise an EngB-type G domain in the interval 22 to 194; it reads HLPEIAFAGR…WARIDALLEP (173 aa). GTP-binding positions include 30 to 37, 57 to 61, 75 to 78, 142 to 145, and 173 to 175; these read GRSNVGKS, GRTQL, DLPG, TKCD, and FSA. Residues Ser-37 and Thr-59 each contribute to the Mg(2+) site. Residues 195–214 are disordered; sequence TAAETPGIPEEPAPPGPVND. Residues 203–214 are compositionally biased toward pro residues; sequence PEEPAPPGPVND.

The protein belongs to the TRAFAC class TrmE-Era-EngA-EngB-Septin-like GTPase superfamily. EngB GTPase family. It depends on Mg(2+) as a cofactor.

Its function is as follows. Necessary for normal cell division and for the maintenance of normal septation. The protein is Probable GTP-binding protein EngB of Geobacter sp. (strain M21).